The sequence spans 180 residues: p-cumate 2,3-dioxygenase system, small oxygenase component (180 aa).

The protein belongs to the bacterial ring-hydroxylating dioxygenase beta subunit family. As to quaternary structure, the p-cumate 2,3-dioxygenase multicomponent enzyme system is composed of an electron transfer component and a dioxygenase component (iron sulfur protein (ISP)). The electron transfer component is composed of a ferredoxin reductase (CmtAa) and a ferredoxin (CmtAd), and the dioxygenase component is formed of a large alpha subunit (CmtAb) and a small beta subunit (CmtAc).

It participates in aromatic compound metabolism; p-cumate degradation; acetaldehyde and pyruvate from p-cumate. In terms of biological role, component of the p-cumate 2,3-dioxygenase multicomponent enzyme system which catalyzes the incorporation of both atoms of molecular oxygen into p-cumate to form cis-2,3-dihydroxy-2,3-dihydro-p-cumate. The beta subunit seems to have a structural role in the holoenzyme. Also able to catalyze the cis-dihydroxylation of indole-2-carboxylate and indole-3-carboxylate. The polypeptide is p-cumate 2,3-dioxygenase system, small oxygenase component (Pseudomonas putida (Arthrobacter siderocapsulatus)).